Reading from the N-terminus, the 923-residue chain is Periplasmic nitrate reductase (923 aa).

The segment at residues 1–30 (MNRRDFIKNTAIASAASVAGLSVPSSMLGA) is a signal peptide (tat-type signal). Residues 34-90 (WKWDKAVCRFCGTGCGIMIARKDGKIVATKGDPAAPVNRGLNCIKGYFNAKIMYGED) form the 4Fe-4S Mo/W bis-MGD-type domain. [4Fe-4S] cluster contacts are provided by C41, C44, C48, and C76. Residues K78, Q146, N171, C175, 208–215 (WGANMAEM), M416, Q420, N526, 551–552 (SD), K574, D601, and 813–822 (TGRVLEHWHS) contribute to the Mo-bis(molybdopterin guanine dinucleotide) site. W889 provides a ligand contact to substrate. Mo-bis(molybdopterin guanine dinucleotide) contacts are provided by N897 and K914.

The protein belongs to the prokaryotic molybdopterin-containing oxidoreductase family. NasA/NapA/NarB subfamily. Component of the periplasmic nitrate reductase NapAB complex composed of NapA and NapB. [4Fe-4S] cluster is required as a cofactor. Requires Mo-bis(molybdopterin guanine dinucleotide) as cofactor. Post-translationally, predicted to be exported by the Tat system. The position of the signal peptide cleavage has not been experimentally proven.

Its subcellular location is the periplasm. The catalysed reaction is 2 Fe(II)-[cytochrome] + nitrate + 2 H(+) = 2 Fe(III)-[cytochrome] + nitrite + H2O. Catalytic subunit of the periplasmic nitrate reductase complex NapAB. Receives electrons from NapB and catalyzes the reduction of nitrate to nitrite. The chain is Periplasmic nitrate reductase from Campylobacter jejuni subsp. jejuni serotype O:23/36 (strain 81-176).